The following is a 751-amino-acid chain: Cytosolic neutral trehalase (751 aa).

Over residues 1 to 15 the composition is skewed to polar residues; the sequence is MDDSALPSNTSNGIN. Disordered regions lie at residues 1–42 and 64–88; these read MDDS…NPES and DFHE…NPRK. Residues 64-78 show a composition bias toward basic and acidic residues; sequence DFHEMLGDRNTRRGS. 5 residues coordinate Ca(2+): aspartate 105, aspartate 107, asparagine 109, glutamine 111, and aspartate 116. Residues arginine 292, 299 to 300, asparagine 336, 345 to 347, glutamate 412, arginine 461, and glycine 464 contribute to the substrate site; these read WD and RSQ. Active-site proton donor/acceptor residues include aspartate 466 and glutamate 670.

This sequence belongs to the glycosyl hydrolase 37 family. It depends on Ca(2+) as a cofactor.

It is found in the cytoplasm. It catalyses the reaction alpha,alpha-trehalose + H2O = alpha-D-glucose + beta-D-glucose. Its pathway is carbohydrate degradation. Activated by calcium. In terms of biological role, hydrolyzes intracellular trehalose to glucose. The disaccharide trehalose serves as a storage carbohydrate that is mobilized during conidial germination. Regulates the level of trehalose as a protectant for cell integrity during heat stress. This is Cytosolic neutral trehalase from Emericella nidulans (strain FGSC A4 / ATCC 38163 / CBS 112.46 / NRRL 194 / M139) (Aspergillus nidulans).